A 286-amino-acid polypeptide reads, in one-letter code: ATP synthase gamma chain (286 aa).

This sequence belongs to the ATPase gamma chain family. As to quaternary structure, F-type ATPases have 2 components, CF(1) - the catalytic core - and CF(0) - the membrane proton channel. CF(1) has five subunits: alpha(3), beta(3), gamma(1), delta(1), epsilon(1). CF(0) has three main subunits: a, b and c.

The protein resides in the cell inner membrane. Functionally, produces ATP from ADP in the presence of a proton gradient across the membrane. The gamma chain is believed to be important in regulating ATPase activity and the flow of protons through the CF(0) complex. The chain is ATP synthase gamma chain from Leptospira borgpetersenii serovar Hardjo-bovis (strain JB197).